A 263-amino-acid polypeptide reads, in one-letter code: uncharacterized protein (263 aa).

The protein belongs to the AtsA family.

The protein resides in the plastid. It is found in the chloroplast. This is an uncharacterized protein from Porphyra purpurea (Red seaweed).